The chain runs to 281 residues: Putative integrase/recombinase y4rD (281 aa).

In terms of domain architecture, Core-binding (CB) spans 5–98 (LLLAPLLESY…AIRSFFHHVA (94 aa)). Residues 122–281 (EVTHHLTKAE…TMSGTENASV (160 aa)) form the Tyr recombinase domain. Active-site residues include Arg-162, Lys-188, His-262, and Arg-265.

It belongs to the 'phage' integrase family.

Functionally, seems to be non-functional. This chain is Putative integrase/recombinase y4rD, found in Sinorhizobium fredii (strain NBRC 101917 / NGR234).